The chain runs to 1463 residues: Clustered mitochondria protein homolog (1463 aa).

Residues 1–79 form a disordered region; the sequence is MAKNKKQNGK…ETEQQQQQQE (79 aa). A compositionally biased stretch (low complexity) spans 10-22; it reads KAKTPPVVAAAAG. A Clu domain is found at 374–616; that stretch reads RAEDTFSSKL…RTFPPDVNFL (243 aa). 3 disordered regions span residues 684–753, 942–988, and 1387–1463; these read AQKT…SEDA, GDGQ…SVPS, and QKEA…RRKS. Residues 692-702 show a composition bias toward low complexity; sequence KQAAIEAAAPA. A compositionally biased stretch (basic and acidic residues) spans 703 to 731; sequence EGDKTPAKDAKDGKEAGKDANDGKEEGST. The segment covering 955–964 has biased composition (basic residues); that stretch reads GGKKQNKQSK. The segment covering 965-980 has biased composition (gly residues); that stretch reads RGGGGGGGKGAAGGGR. A compositionally biased stretch (low complexity) spans 1438–1456; the sequence is AEAASHTAGGAAANTAAPA.

This sequence belongs to the CLU family.

The protein resides in the cytoplasm. MRNA-binding protein involved in proper cytoplasmic distribution of mitochondria. This chain is Clustered mitochondria protein homolog, found in Anopheles gambiae (African malaria mosquito).